The chain runs to 122 residues: Large ribosomal subunit protein uL18 (122 aa).

The protein belongs to the universal ribosomal protein uL18 family. Part of the 50S ribosomal subunit; part of the 5S rRNA/L5/L18/L25 subcomplex. Contacts the 5S and 23S rRNAs.

This is one of the proteins that bind and probably mediate the attachment of the 5S RNA into the large ribosomal subunit, where it forms part of the central protuberance. The protein is Large ribosomal subunit protein uL18 of Leptospira borgpetersenii serovar Hardjo-bovis (strain JB197).